We begin with the raw amino-acid sequence, 807 residues long: Glycerol-3-phosphate acyltransferase (807 aa).

Residues 308 to 313 carry the HXXXXD motif motif; sequence CHRSHM.

This sequence belongs to the GPAT/DAPAT family.

It is found in the cell inner membrane. It carries out the reaction sn-glycerol 3-phosphate + an acyl-CoA = a 1-acyl-sn-glycero-3-phosphate + CoA. The protein operates within phospholipid metabolism; CDP-diacylglycerol biosynthesis; CDP-diacylglycerol from sn-glycerol 3-phosphate: step 1/3. In Shewanella pealeana (strain ATCC 700345 / ANG-SQ1), this protein is Glycerol-3-phosphate acyltransferase.